Consider the following 112-residue polypeptide: Putative pterin-4-alpha-carbinolamine dehydratase (112 aa).

Belongs to the pterin-4-alpha-carbinolamine dehydratase family.

The enzyme catalyses (4aS,6R)-4a-hydroxy-L-erythro-5,6,7,8-tetrahydrobiopterin = (6R)-L-erythro-6,7-dihydrobiopterin + H2O. The chain is Putative pterin-4-alpha-carbinolamine dehydratase from Syntrophotalea carbinolica (strain DSM 2380 / NBRC 103641 / GraBd1) (Pelobacter carbinolicus).